The sequence spans 342 residues: Phenylalanine--tRNA ligase alpha subunit (342 aa).

Mg(2+) is bound at residue E257.

This sequence belongs to the class-II aminoacyl-tRNA synthetase family. Phe-tRNA synthetase alpha subunit type 1 subfamily. As to quaternary structure, tetramer of two alpha and two beta subunits. It depends on Mg(2+) as a cofactor.

Its subcellular location is the cytoplasm. The catalysed reaction is tRNA(Phe) + L-phenylalanine + ATP = L-phenylalanyl-tRNA(Phe) + AMP + diphosphate + H(+). The polypeptide is Phenylalanine--tRNA ligase alpha subunit (Legionella pneumophila subsp. pneumophila (strain Philadelphia 1 / ATCC 33152 / DSM 7513)).